The sequence spans 306 residues: Arylesterase (306 aa).

The Involved in the stabilization of the negatively charged intermediate by the formation of the oxyanion hole signature appears at 82–84 (HGG). Residues Ser156, Asp251, and His281 contribute to the active site.

In terms of assembly, monomer.

The enzyme catalyses a phenyl acetate + H2O = a phenol + acetate + H(+). The catalysed reaction is An aryl dialkyl phosphate + H2O = dialkyl phosphate + an aryl alcohol.. With respect to regulation, completely inhibited by chemical modifiers that are specific to Cys (HgCl(2) and p-chloromercuribenzoic acid), His (diethyl pyrocarbonate) and Ser (diisopropyl fluorophosphate and phenylmethanesulfonyl fluoride). No significant effect with chemical modifiers specific to Lys (pyridoxal 5'-phosphate) and Arg (phenylglyoxal). Not inhibited by inhibitors of A-esterases (paraoxon) or C-esterases (physostigmine/eserine). Activity is also not effected by incubation with 5 mM divalent cations for 30 minutes at 30 degrees Celsius or with 10 mM EDTA for 60 minutes at 75 degrees Celsius. Functionally, has a broad substrate specificity. Hydrolyzes various p-nitrophenyl phosphates, aromatic esters and p-nitrophenyl fatty acids in vitro. Most active against paraoxon, phenyl acetate and p-nitrophenyl caproate (C6), respectively. Also has tributyrinase activity, but shows no hydrolytic activity toward other triacylglycerols including tricaprylin, trimyristin, tripalmitin or triolein in vitro. The protein is Arylesterase of Saccharolobus solfataricus (Sulfolobus solfataricus).